The following is an 854-amino-acid chain: Glucans biosynthesis glucosyltransferase H (854 aa).

A run of 7 helical transmembrane segments spans residues 155-175, 209-229, 528-548, 583-603, 619-639, 671-691, and 695-715; these read ILLA…KTIL, ILVL…TALM, VFLT…FLVL, IALF…SVIL, FLSL…RMLF, FVRH…MAWL, and FLWW…VSVY.

This sequence belongs to the glycosyltransferase 2 family. OpgH subfamily.

It localises to the cell inner membrane. It functions in the pathway glycan metabolism; osmoregulated periplasmic glucan (OPG) biosynthesis. Functionally, involved in the biosynthesis of osmoregulated periplasmic glucans (OPGs). In Pectobacterium atrosepticum (strain SCRI 1043 / ATCC BAA-672) (Erwinia carotovora subsp. atroseptica), this protein is Glucans biosynthesis glucosyltransferase H.